A 774-amino-acid chain; its full sequence is Vezatin (774 aa).

2 helical membrane-spanning segments follow: residues 138 to 158 and 163 to 183; these read IATP…AVAA and SISS…FTVL. Residues 430 to 457 adopt a coiled-coil conformation; it reads VRSLQLHLKALLNEVIVLEDELDKLSSC. Residues 746–757 show a composition bias toward acidic residues; sequence FGDEWDDDDDNE. Residues 746–774 form a disordered region; it reads FGDEWDDDDDNEDHDHDKERNNDSSQLEG. Basic and acidic residues predominate over residues 758 to 767; it reads DHDHDKERNN.

This sequence belongs to the vezatin family. As to quaternary structure, interacts with myosin VIIa and the cadherin-catenins complex.

It localises to the cell membrane. The protein localises to the cell junction. It is found in the adherens junction. Its subcellular location is the nucleus. Its function is as follows. Plays a pivotal role in the establishment of adherens junctions and their maintenance in adult life. The protein is Vezatin (vezt) of Xenopus laevis (African clawed frog).